The sequence spans 689 residues: MSIDNELSKCRNIGIMAHIDAGKTTTTERILFYTGKQNRIGEVHEGAASMDWMEQEKERGITITSAATTCFWNDHRINIIDTPGHVDFTIEVERSLRVLDGAVAVFDGVAGVEPQSETVWRQADKYNVPRICFMNKMDRMGANFYRCVDMVIDRLGATPLVLQLPIGIEKDFVGVVDLLEMRSIIWDEESLGASFHYGEIPGDMIDIAHEYRHKLLESAVELNDDAMNLYFEGKEVPVSLLKNCIRLGVIQSKFVPVLCGSAFKNRGVQPLLDAVVDFLPAPNDVAMIEGIDVKTSNPVSIKSSVNEKFVALAFKVMTDKFVGSLTFIRIYSGKLSSKTTVLNAVKNSTESIGRILLMHANNREDITEAKAGDIVALAGLKKTVTGDTLCALDYPVVLERMEFPDPVMEIAVEPKSTADQEKMGIALSRLVSEDPSLGMCVNPESGQTILKGMGELHLEVIVDRMRREFNVEANIGAPQVAYRETITKSVEIEYIHKKQTGGAGQFAKVNILFEPLPPGSGFQFESKITGGAIPKEYIPGVQNGLEAIRGSGMLAGFPVIDFKATLFDGAFHEVDSSPLAFELAAKGAFRDMVNKAGAILLEPIMKVEIVTPDEYMGDVIGDVNSRRGRVAEMQDRNNTKVILAFIPLAKMFGYVKDLRSMSQGRAQYSMYFSCYEQVPDNILASEIKK.

The tr-type G domain maps to 8 to 283 (SKCRNIGIMA…AVVDFLPAPN (276 aa)). GTP-binding positions include 17–24 (AHIDAGKT), 81–85 (DTPGH), and 135–138 (NKMD).

It belongs to the TRAFAC class translation factor GTPase superfamily. Classic translation factor GTPase family. EF-G/EF-2 subfamily.

Its subcellular location is the cytoplasm. In terms of biological role, catalyzes the GTP-dependent ribosomal translocation step during translation elongation. During this step, the ribosome changes from the pre-translocational (PRE) to the post-translocational (POST) state as the newly formed A-site-bound peptidyl-tRNA and P-site-bound deacylated tRNA move to the P and E sites, respectively. Catalyzes the coordinated movement of the two tRNA molecules, the mRNA and conformational changes in the ribosome. This chain is Elongation factor G, found in Ehrlichia ruminantium (strain Welgevonden).